A 122-amino-acid chain; its full sequence is Large ribosomal subunit protein uL14 (122 aa).

The protein belongs to the universal ribosomal protein uL14 family. Part of the 50S ribosomal subunit. Forms a cluster with proteins L3 and L19. In the 70S ribosome, L14 and L19 interact and together make contacts with the 16S rRNA in bridges B5 and B8.

In terms of biological role, binds to 23S rRNA. Forms part of two intersubunit bridges in the 70S ribosome. This chain is Large ribosomal subunit protein uL14, found in Sulfurovum sp. (strain NBC37-1).